The following is a 99-amino-acid chain: Acylphosphatase (99 aa).

The 87-residue stretch at 11–97 (ARRIHVKGKV…VVAQGFTQKP (87 aa)) folds into the Acylphosphatase-like domain. Active-site residues include arginine 26 and asparagine 44.

This sequence belongs to the acylphosphatase family.

It catalyses the reaction an acyl phosphate + H2O = a carboxylate + phosphate + H(+). The protein is Acylphosphatase (acyP) of Rhizorhabdus wittichii (strain DSM 6014 / CCUG 31198 / JCM 15750 / NBRC 105917 / EY 4224 / RW1) (Sphingomonas wittichii).